The following is a 174-amino-acid chain: Crossover junction endodeoxyribonuclease RuvC (174 aa).

Catalysis depends on residues Asp16, Glu76, and Asp148. Mg(2+)-binding residues include Asp16, Glu76, and Asp148.

The protein belongs to the RuvC family. As to quaternary structure, homodimer which binds Holliday junction (HJ) DNA. The HJ becomes 2-fold symmetrical on binding to RuvC with unstacked arms; it has a different conformation from HJ DNA in complex with RuvA. In the full resolvosome a probable DNA-RuvA(4)-RuvB(12)-RuvC(2) complex forms which resolves the HJ. The cofactor is Mg(2+).

The protein resides in the cytoplasm. The catalysed reaction is Endonucleolytic cleavage at a junction such as a reciprocal single-stranded crossover between two homologous DNA duplexes (Holliday junction).. Functionally, the RuvA-RuvB-RuvC complex processes Holliday junction (HJ) DNA during genetic recombination and DNA repair. Endonuclease that resolves HJ intermediates. Cleaves cruciform DNA by making single-stranded nicks across the HJ at symmetrical positions within the homologous arms, yielding a 5'-phosphate and a 3'-hydroxyl group; requires a central core of homology in the junction. The consensus cleavage sequence is 5'-(A/T)TT(C/G)-3'. Cleavage occurs on the 3'-side of the TT dinucleotide at the point of strand exchange. HJ branch migration catalyzed by RuvA-RuvB allows RuvC to scan DNA until it finds its consensus sequence, where it cleaves and resolves the cruciform DNA. The chain is Crossover junction endodeoxyribonuclease RuvC from Rhodopseudomonas palustris (strain BisA53).